Reading from the N-terminus, the 67-residue chain is ATP synthase F(0) complex subunit 8 (67 aa).

Residues 8–24 form a helical membrane-spanning segment; the sequence is TWFTTVLASSITLFILM. Lys-54 is modified (N6-acetyllysine; alternate). Lys-54 carries the post-translational modification N6-succinyllysine; alternate. At Lys-57 the chain carries N6-acetyllysine.

Belongs to the ATPase protein 8 family. Component of the ATP synthase complex composed at least of ATP5F1A/subunit alpha, ATP5F1B/subunit beta, ATP5MC1/subunit c (homooctomer), MT-ATP6/subunit a, MT-ATP8/subunit 8, ATP5ME/subunit e, ATP5MF/subunit f, ATP5MG/subunit g, ATP5MK/subunit k, ATP5MJ/subunit j, ATP5F1C/subunit gamma, ATP5F1D/subunit delta, ATP5F1E/subunit epsilon, ATP5PF/subunit F6, ATP5PB/subunit b, ATP5PD/subunit d, ATP5PO/subunit OSCP. ATP synthase complex consists of a soluble F(1) head domain (subunits alpha(3) and beta(3)) - the catalytic core - and a membrane F(0) domain - the membrane proton channel (subunits c, a, 8, e, f, g, k and j). These two domains are linked by a central stalk (subunits gamma, delta, and epsilon) rotating inside the F1 region and a stationary peripheral stalk (subunits F6, b, d, and OSCP). Interacts with PRICKLE3.

Its subcellular location is the mitochondrion membrane. Its function is as follows. Subunit 8, of the mitochondrial membrane ATP synthase complex (F(1)F(0) ATP synthase or Complex V) that produces ATP from ADP in the presence of a proton gradient across the membrane which is generated by electron transport complexes of the respiratory chain. ATP synthase complex consist of a soluble F(1) head domain - the catalytic core - and a membrane F(1) domain - the membrane proton channel. These two domains are linked by a central stalk rotating inside the F(1) region and a stationary peripheral stalk. During catalysis, ATP synthesis in the catalytic domain of F(1) is coupled via a rotary mechanism of the central stalk subunits to proton translocation. In vivo, can only synthesize ATP although its ATP hydrolase activity can be activated artificially in vitro. Part of the complex F(0) domain. This chain is ATP synthase F(0) complex subunit 8, found in Cricetulus griseus (Chinese hamster).